A 66-amino-acid polypeptide reads, in one-letter code: Ocellatin-PT3 (66 aa).

The signal sequence occupies residues 1-22 (MAFLKKSLFLVLFLGLVSLSIC). Residues 23–39 (DEEKRQDEDDDDDDDEE) constitute a propeptide that is removed on maturation. Val-66 is modified (valine amide).

In terms of tissue distribution, expressed by the skin glands.

It localises to the secreted. In terms of biological role, has antibacterial activity against Gram-negative bacterium E.coli ATCC 25922 (MIC=320 uM) but not against S.pneumoniae ATCC 700603, S.choleraesuis ATCC 14028 or Gram-positive bacterium S.aureus ATCC 29313. Shows no hemolytic activity and no cytotoxicity. The protein is Ocellatin-PT3 of Leptodactylus pustulatus (Ceara white-lipped frog).